We begin with the raw amino-acid sequence, 468 residues long: MAGVVHVSLAALLLLPMAPAMHSDCIFKKEQAMCLEKIQRANELMGFNDSSPGCPGMWDNITCWKPAHVGEMVLVSCPELFRIFNPDQVWETETIGESDFGDSNSLDLSDMGVVSRNCTEDGWSEPFPHYFDACGFDEYESETGDQDYYYLSVKALYTVGYSTSLVTLTTAMVILCRFRKLHCTRNFIHMNLFVSFMLRAISVFIKDWILYAEQDSNHCFISTVECKAVMVFFHYCVVSNYFWLFIEGLYLFTLLVETFFPERRYFYWYTIIGWGTPTVCVTVWATLRLYFDDTGCWDMNDSTALWWVIKGPVVGSIMVNFVLFIGIIVILVQKLQSPDMGGNESSIYLRLARSTLLLIPLFGIHYTVFAFSPENVSKRERLVFELGLGSFQGFVVAVLYCFLNGEVQAEIKRKWRSWKVNRYFAVDFKHRHPSLASSGVNGGTQLSILSKSSSQIRMSGLPADNLAT.

The N-terminal stretch at 1–20 is a signal peptide; it reads MAGVVHVSLAALLLLPMAPA. Over 21 to 152 the chain is Extracellular; sequence MHSDCIFKKE…TGDQDYYYLS (132 aa). 3 cysteine pairs are disulfide-bonded: Cys34–Cys63, Cys54–Cys118, and Cys77–Cys134. Asn48, Asn60, and Asn117 each carry an N-linked (GlcNAc...) asparagine glycan. The interval 125–139 is important for ADCYAP1/PACAP ligand binding and specificity; it reads EPFPHYFDACGFDEY. The helical transmembrane segment at 153-177 threads the bilayer; it reads VKALYTVGYSTSLVTLTTAMVILCR. Topologically, residues 178–187 are cytoplasmic; sequence FRKLHCTRNF. The chain crosses the membrane as a helical span at residues 188–208; the sequence is IHMNLFVSFMLRAISVFIKDW. The Extracellular segment spans residues 209–223; it reads ILYAEQDSNHCFIST. A helical membrane pass occupies residues 224-249; the sequence is VECKAVMVFFHYCVVSNYFWLFIEGL. An intrachain disulfide couples Cys226 to Cys296. Topologically, residues 250-267 are cytoplasmic; it reads YLFTLLVETFFPERRYFY. Residues 268–290 traverse the membrane as a helical segment; that stretch reads WYTIIGWGTPTVCVTVWATLRLY. The Extracellular portion of the chain corresponds to 291 to 302; the sequence is FDDTGCWDMNDS. Asn300 is a glycosylation site (N-linked (GlcNAc...) asparagine). Residues 303–329 traverse the membrane as a helical segment; that stretch reads TALWWVIKGPVVGSIMVNFVLFIGIIV. At 330–347 the chain is on the cytoplasmic side; that stretch reads ILVQKLQSPDMGGNESSI. Residues 348-374 form a helical membrane-spanning segment; it reads YLRLARSTLLLIPLFGIHYTVFAFSPE. An N-linked (GlcNAc...) asparagine glycan is attached at Asn375. Residues 375–379 lie on the Extracellular side of the membrane; sequence NVSKR. A helical transmembrane segment spans residues 380–403; it reads ERLVFELGLGSFQGFVVAVLYCFL. The Cytoplasmic segment spans residues 404-468; that stretch reads NGEVQAEIKR…SGLPADNLAT (65 aa). Ser434 and Ser447 each carry phosphoserine.

This sequence belongs to the G-protein coupled receptor 2 family. As to quaternary structure, interacts with maxadilan, a vasodilator peptide from Lutzomyia longipalpis saliva; the interaction results in ADCYAP1R1 activation. Most abundant in the brain, low expression in the lung, liver, thymus, spleen, pancreas and placenta.

It localises to the cell membrane. Its activity is regulated as follows. Several synthetic peptides derived from maxadilan, a vasodilator peptide from Lutzomyia longipalpis saliva, act as antagonists for ADCYAP1R1. Its function is as follows. G protein-coupled receptor activated by the neuropeptide pituitary adenylate cyclase-activating polypeptide (ADCYAP1/PACAP). Binds both PACAP27 and PACAP38 bioactive peptides. Ligand binding causes a conformation change that triggers signaling via guanine nucleotide-binding proteins (G proteins) and modulates the activity of downstream effectors. Activates cAMP-dependent pathway. May regulate the release of adrenocorticotropin, luteinizing hormone, growth hormone, prolactin, epinephrine, and catecholamine. May play a role in spermatogenesis and sperm motility. Causes smooth muscle relaxation and secretion in the gastrointestinal tract. The protein is Pituitary adenylate cyclase-activating polypeptide type I receptor of Homo sapiens (Human).